Reading from the N-terminus, the 228-residue chain is Large ribosomal subunit protein uL3 (228 aa).

Gln151 bears the N5-methylglutamine mark.

This sequence belongs to the universal ribosomal protein uL3 family. In terms of assembly, part of the 50S ribosomal subunit. Forms a cluster with proteins L14 and L19. In terms of processing, methylated by PrmB.

Functionally, one of the primary rRNA binding proteins, it binds directly near the 3'-end of the 23S rRNA, where it nucleates assembly of the 50S subunit. This chain is Large ribosomal subunit protein uL3, found in Rhizobium meliloti (strain 1021) (Ensifer meliloti).